We begin with the raw amino-acid sequence, 85 residues long: Hepcidin (85 aa).

The first 22 residues, 1 to 22 (MALSTRIQAACLLLLLLASVAS), serve as a signal peptide directing secretion. Residues 23–54 (VSVLPHQTGQLTDLRAQDTAGAEAGLQPTLQL) constitute a propeptide that is removed on maturation. 4 disulfides stabilise this stretch: Cys-67–Cys-83, Cys-70–Cys-73, Cys-71–Cys-79, and Cys-74–Cys-82.

The protein belongs to the hepcidin family. In terms of assembly, interacts with SLC40A1; this interaction promotes SLC40A1 rapid ubiquitination.

Its subcellular location is the secreted. Liver-produced hormone that constitutes the main circulating regulator of iron absorption and distribution across tissues. Acts by promoting endocytosis and degradation of ferroportin/SLC40A1, leading to the retention of iron in iron-exporting cells and decreased flow of iron into plasma. Controls the major flows of iron into plasma: absorption of dietary iron in the intestine, recycling of iron by macrophages, which phagocytose old erythrocytes and other cells, and mobilization of stored iron from hepatocytes. Its function is as follows. Has strong antimicrobial activity against E.coli ML35P N.cinerea and weaker against S.epidermidis, S.aureus and group b streptococcus bacteria. Active against the fungus C.albicans. No activity against P.aeruginosa. This Canis lupus familiaris (Dog) protein is Hepcidin (HAMP).